The sequence spans 403 residues: Putative glutamate--cysteine ligase 2 (403 aa).

The disordered stretch occupies residues 370 to 403; that stretch reads ESAAQRRAPQAARRRIRASSEPLGPMSMWPERLH.

Belongs to the glutamate--cysteine ligase type 2 family. YbdK subfamily.

It carries out the reaction L-cysteine + L-glutamate + ATP = gamma-L-glutamyl-L-cysteine + ADP + phosphate + H(+). ATP-dependent carboxylate-amine ligase which exhibits weak glutamate--cysteine ligase activity. The polypeptide is Putative glutamate--cysteine ligase 2 (Bordetella avium (strain 197N)).